The sequence spans 279 residues: Nucleotide-binding protein THA_1518 (279 aa).

Gly9 to Ser16 lines the ATP pocket. Residue Asp57 to Ser60 participates in GTP binding.

Belongs to the RapZ-like family.

Its function is as follows. Displays ATPase and GTPase activities. The protein is Nucleotide-binding protein THA_1518 of Thermosipho africanus (strain TCF52B).